The primary structure comprises 189 residues: Movement protein (189 aa).

Belongs to the tombusvirus/aureusvirus movement protein p22 family. Interacts with host protein HFI22. Post-translationally, phosphorylated.

The protein localises to the host membrane. Its function is as follows. Transports viral genome to neighboring plant cells directly through plasmosdesmata, without any budding. The movement protein allows efficient cell to cell propagation, by bypassing the host cell wall barrier. The polypeptide is Movement protein (Capsicum annuum (Capsicum pepper)).